The sequence spans 199 residues: Peptidyl-tRNA hydrolase (199 aa).

Tyrosine 18 is a tRNA binding site. The active-site Proton acceptor is histidine 23. Positions 72, 74, and 120 each coordinate tRNA.

The protein belongs to the PTH family. Monomer.

The protein resides in the cytoplasm. It carries out the reaction an N-acyl-L-alpha-aminoacyl-tRNA + H2O = an N-acyl-L-amino acid + a tRNA + H(+). Functionally, hydrolyzes ribosome-free peptidyl-tRNAs (with 1 or more amino acids incorporated), which drop off the ribosome during protein synthesis, or as a result of ribosome stalling. Its function is as follows. Catalyzes the release of premature peptidyl moieties from peptidyl-tRNA molecules trapped in stalled 50S ribosomal subunits, and thus maintains levels of free tRNAs and 50S ribosomes. The sequence is that of Peptidyl-tRNA hydrolase from Bifidobacterium animalis subsp. lactis (strain AD011).